The following is a 783-amino-acid chain: Cyclic di-GMP phosphodiesterase NbdA (783 aa).

The MHYT domain maps to 81-274 (YSPSLVALAF…FTGMAALVLS (194 aa)). The next 7 helical transmembrane spans lie at 84 to 104 (SLVALAFLVACLAGYTALDMV), 120 to 140 (IGAFCLGSGIWATHFVAMLAF), 150 to 170 (LPITGLSLLIAVAASYLTMYM), 176 to 196 (FGLLPCLLAACCIGLGIAAMH), 215 to 235 (LFALSVLIAIGAAFTALAAVP), 255 to 275 (LLAGAIAAMHFTGMAALVLSV), and 292 to 312 (LGWLTGVLASAIAACGIWAAW). The Cytoplasmic portion of the chain corresponds to 313–783 (SEKQRERRLS…APPLRSLNQA (471 aa)). The GGDEF domain maps to 375–507 (KGLAVMFLDL…GRNNAQFFSR (133 aa)). Residues 516-770 (ELQMEEELRQ…ALEEFLRAYR (255 aa)) form the EAL domain. The 3',3'-c-di-GMP site is built by Gln-537, Glu-551, Arg-555, Asn-610, and Asn-615. Glu-551 provides a ligand contact to Mg(2+). Asn-610 provides a ligand contact to Mg(2+). Mg(2+) is bound by residues Glu-642, Asp-672, and Asp-673. Position 672 (Asp-672) interacts with 3',3'-c-di-GMP. Arg-696 serves as a coordination point for 3',3'-c-di-GMP. Glu-729 contributes to the Mg(2+) binding site. 3',3'-c-di-GMP-binding residues include Glu-732 and Tyr-751.

The cofactor is Mg(2+).

It is found in the cell inner membrane. The catalysed reaction is 3',3'-c-di-GMP + H2O = 5'-phosphoguanylyl(3'-&gt;5')guanosine + H(+). Its activity is regulated as follows. PDE activity is stimulated by GTP. It could also be stimulated by NO. In terms of biological role, displays c-di-GMP-specific phosphodiesterase (PDE) activity. Seems to play a specific role in nitric oxide (NO)-induced biofilm dispersion. Enhanced NbdA synthesis in the presence of NO increases PDE activity, leading to reduced cellular c-di-GMP levels and biofilm dispersion. Does not show diguanylate cyclase (DGC) activity. In Pseudomonas aeruginosa (strain ATCC 15692 / DSM 22644 / CIP 104116 / JCM 14847 / LMG 12228 / 1C / PRS 101 / PAO1), this protein is Cyclic di-GMP phosphodiesterase NbdA.